The sequence spans 532 residues: O-phosphoserine--tRNA(Cys) ligase (532 aa).

Residues 186–188 (HMT), 231–233 (SAS), 273–274 (YY), and Asn317 each bind substrate.

It belongs to the class-II aminoacyl-tRNA synthetase family. O-phosphoseryl-tRNA(Cys) synthetase subfamily. As to quaternary structure, homotetramer. Interacts with SepCysS.

The enzyme catalyses tRNA(Cys) + O-phospho-L-serine + ATP = O-phospho-L-seryl-tRNA(Cys) + AMP + diphosphate. Catalyzes the attachment of O-phosphoserine (Sep) to tRNA(Cys). In Methanothermobacter thermautotrophicus (strain ATCC 29096 / DSM 1053 / JCM 10044 / NBRC 100330 / Delta H) (Methanobacterium thermoautotrophicum), this protein is O-phosphoserine--tRNA(Cys) ligase.